Here is a 1359-residue protein sequence, read N- to C-terminus: Junctional cadherin 5-associated protein (1359 aa).

Disordered stretches follow at residues 1-147, 249-411, 454-554, 591-813, 840-1076, 1105-1141, 1157-1207, 1225-1260, and 1276-1359; these read MYSV…SLPV, PLNE…PAHP, NSSP…TCET, SHLP…CNSK, KELQ…TIEI, RAGQ…PRVS, PLFV…KDVE, SVAG…DRLM, and FRNA…VERV. Residues 15–28 are compositionally biased toward basic and acidic residues; that stretch reads LSRDPPASREDNPK. Composition is skewed to polar residues over residues 82–91 and 98–112; these read PQSTSASRTS and QPPS…TGND. The segment covering 120–135 has biased composition (basic and acidic residues); the sequence is RQEARSQKPREHENLE. The span at 302 to 321 shows a compositional bias: low complexity; it reads QQSRGGADSSDSQDSQQMDA. Positions 335-353 are enriched in pro residues; that stretch reads LEPPVYVPPPSYRSPPQNI. Residues 539–554 show a composition bias toward polar residues; it reads RQVSSPYSQGESTCET. Residues 591–613 are compositionally biased toward basic and acidic residues; that stretch reads SHLPDRDMDNNDLKPSADQKNGS. Composition is skewed to polar residues over residues 619–632, 689–704, and 756–773; these read LQEQ…STDL, QQTQ…SSQL, and LSPS…SVDQ. The span at 849–859 shows a compositional bias: low complexity; that stretch reads SSSSSSSSSSS. Over residues 868-880 the composition is skewed to basic and acidic residues; that stretch reads QENRAHCRQEDVG. Residues 1003-1013 are compositionally biased toward polar residues; that stretch reads PKITSAFSSVK. Phosphoserine is present on residues Ser1044 and Ser1050. Ser1194 is modified (phosphoserine). Residue Ser1281 is modified to Phosphoserine. Basic and acidic residues predominate over residues 1324–1342; that stretch reads SISREEKEHPAAQKEKSMD.

It is found in the cell junction. The protein resides in the adherens junction. The chain is Junctional cadherin 5-associated protein from Homo sapiens (Human).